The chain runs to 591 residues: Inactive metallocarboxypeptidase ECM14 (591 aa).

A signal peptide spans 1–21; the sequence is MRLFSHLAVLAILACAVPITA. The propeptide occupies 22-175; sequence IPSFLSNSYP…QTIYESYPSS (154 aa). The region spanning 203 to 523 is the Peptidase M14 domain; sequence DYQPFSVIVP…NAVMVLGRFL (321 aa). Residues H265 and E268 each coordinate Zn(2+). Residues 265–268, R323, and 340–341 contribute to the substrate site; these read HARE and DR. A disulfide bond links C334 and C357. N350, N381, and N386 each carry an N-linked (GlcNAc...) asparagine glycan. Residue H397 participates in Zn(2+) binding. 398-399 is a binding site for substrate; it reads SY. The tract at residues 533-591 is disordered; that stretch reads DWEDESQRPKADEDDIPSENELDENDDSWIPYDYRNHDDQNEGEGYDNDEWGFRRRRKR. Composition is skewed to acidic residues over residues 544–559 and 573–582; these read DEDD…ENDD and NEGEGYDNDE.

This sequence belongs to the peptidase M14 family. It depends on Zn(2+) as a cofactor.

The protein localises to the vacuole. It is found in the secreted. In terms of biological role, inactive carboxypeptidase that may play a role in cell wall organization and biogenesis. This is Inactive metallocarboxypeptidase ECM14 (ECM14) from Paracoccidioides brasiliensis (strain Pb18).